Consider the following 541-residue polypeptide: Membrane protein insertase YidC (541 aa).

5 helical membrane passes run 7 to 27, 340 to 360, 415 to 435, 453 to 473, and 494 to 514; these read LFLV…QTDH, QLIH…TFIV, LGGC…YYML, LAAP…MFFI, and PVIF…YYIV.

The protein belongs to the OXA1/ALB3/YidC family. Type 1 subfamily. Interacts with the Sec translocase complex via SecD. Specifically interacts with transmembrane segments of nascent integral membrane proteins during membrane integration.

It localises to the cell inner membrane. In terms of biological role, required for the insertion and/or proper folding and/or complex formation of integral membrane proteins into the membrane. Involved in integration of membrane proteins that insert both dependently and independently of the Sec translocase complex, as well as at least some lipoproteins. Aids folding of multispanning membrane proteins. This is Membrane protein insertase YidC from Edwardsiella ictaluri (strain 93-146).